The following is a 197-amino-acid chain: Probable chorismate pyruvate-lyase 2 (197 aa).

Over residues 1–14 the composition is skewed to basic and acidic residues; the sequence is MRFDAADAHWRETP. The disordered stretch occupies residues 1-23; sequence MRFDAADAHWRETPRPGASSAQK. The substrate site is built by Arg-73, Leu-111, and Glu-173.

It belongs to the UbiC family.

The protein localises to the cytoplasm. It carries out the reaction chorismate = 4-hydroxybenzoate + pyruvate. It participates in cofactor biosynthesis; ubiquinone biosynthesis. Removes the pyruvyl group from chorismate, with concomitant aromatization of the ring, to provide 4-hydroxybenzoate (4HB) for the ubiquinone pathway. The polypeptide is Probable chorismate pyruvate-lyase 2 (Burkholderia pseudomallei (strain 1710b)).